A 719-amino-acid chain; its full sequence is Protein ENHANCED DISEASE RESISTANCE 2-like (719 aa).

The PH domain occupies 3–110 (KVVYEGWMVR…WKEKIECVID (108 aa)). The interval 134 to 173 (AGRTASSSDHESPFSALEDENDSQRDLLRRTTIGNGPPES) is disordered. The START domain maps to 180–392 (EFDAELSNQS…VSGLREWFSQ (213 aa)). The interval 414-478 (ALGKGGKHHH…ETDAKKTEEP (65 aa)) is disordered. The span at 426–439 (SLSIDQTNGASRNS) shows a compositional bias: polar residues. The span at 442-461 (MDEDSDDDDEFQIPDSEPEP) shows a compositional bias: acidic residues. Residues 462 to 477 (ETSKQDQETDAKKTEE) are compositionally biased toward basic and acidic residues. The chain crosses the membrane as a helical span at residues 665 to 685 (GVLGLVIGVITSLVVEMAFLV).

The protein resides in the endoplasmic reticulum membrane. Its subcellular location is the cell membrane. The protein localises to the endosome membrane. Its function is as follows. Binds to phosphatidylinositol-4-phosphate (PtdIns(4)P). May regulate the salicylic acid- (SA-) mediated resistance to pathogens. The polypeptide is Protein ENHANCED DISEASE RESISTANCE 2-like (EDR2L) (Arabidopsis thaliana (Mouse-ear cress)).